A 66-amino-acid chain; its full sequence is MIIPVRCFTCGRPLGHLYPIFKRRVLAGERPGEVLDSLGVYRYCCRRTLLSHVEWIDDVLAYERRS.

Positions 7, 10, 44, and 45 each coordinate Zn(2+).

The protein belongs to the archaeal Rpo10/eukaryotic RPB10 RNA polymerase subunit family. Part of the RNA polymerase complex. The cofactor is Zn(2+).

It localises to the cytoplasm. It catalyses the reaction RNA(n) + a ribonucleoside 5'-triphosphate = RNA(n+1) + diphosphate. Functionally, DNA-dependent RNA polymerase (RNAP) catalyzes the transcription of DNA into RNA using the four ribonucleoside triphosphates as substrates. The sequence is that of DNA-directed RNA polymerase subunit Rpo10 from Pyrobaculum neutrophilum (strain DSM 2338 / JCM 9278 / NBRC 100436 / V24Sta) (Thermoproteus neutrophilus).